Reading from the N-terminus, the 176-residue chain is RNA pyrophosphohydrolase (176 aa).

The region spanning 6 to 149 (GYRPNVGIVI…KRDVYRRVMK (144 aa)) is the Nudix hydrolase domain. Positions 38-59 (GGINPGESAEQAMYRELFEEVG) match the Nudix box motif.

It belongs to the Nudix hydrolase family. RppH subfamily. A divalent metal cation is required as a cofactor.

Accelerates the degradation of transcripts by removing pyrophosphate from the 5'-end of triphosphorylated RNA, leading to a more labile monophosphorylated state that can stimulate subsequent ribonuclease cleavage. The sequence is that of RNA pyrophosphohydrolase from Salmonella arizonae (strain ATCC BAA-731 / CDC346-86 / RSK2980).